We begin with the raw amino-acid sequence, 414 residues long: Lipoyl synthase, mitochondrial (414 aa).

Residues 1–31 (MAVSTSHFRSLCASRPLSRTAIVGHISCRSY) constitute a mitochondrion transit peptide. The tract at residues 31–51 (YATTEPSPSATSTSTTTTARR) is disordered. A compositionally biased stretch (low complexity) spans 32–48 (ATTEPSPSATSTSTTTT). 7 residues coordinate [4Fe-4S] cluster: C131, C136, C142, C162, C166, C169, and S377. Residues 145–366 (GSDKSAATAT…RQRALDMGFL (222 aa)) form the Radical SAM core domain.

Belongs to the radical SAM superfamily. Lipoyl synthase family. [4Fe-4S] cluster is required as a cofactor.

It localises to the mitochondrion. The catalysed reaction is [[Fe-S] cluster scaffold protein carrying a second [4Fe-4S](2+) cluster] + N(6)-octanoyl-L-lysyl-[protein] + 2 oxidized [2Fe-2S]-[ferredoxin] + 2 S-adenosyl-L-methionine + 4 H(+) = [[Fe-S] cluster scaffold protein] + N(6)-[(R)-dihydrolipoyl]-L-lysyl-[protein] + 4 Fe(3+) + 2 hydrogen sulfide + 2 5'-deoxyadenosine + 2 L-methionine + 2 reduced [2Fe-2S]-[ferredoxin]. It participates in protein modification; protein lipoylation via endogenous pathway; protein N(6)-(lipoyl)lysine from octanoyl-[acyl-carrier-protein]: step 2/2. In terms of biological role, catalyzes the radical-mediated insertion of two sulfur atoms into the C-6 and C-8 positions of the octanoyl moiety bound to the lipoyl domains of lipoate-dependent enzymes, thereby converting the octanoylated domains into lipoylated derivatives. In Aspergillus fumigatus (strain CBS 144.89 / FGSC A1163 / CEA10) (Neosartorya fumigata), this protein is Lipoyl synthase, mitochondrial.